The sequence spans 860 residues: Leucine--tRNA ligase (860 aa).

Residues 42–52 (PYPSGRLHMGH) carry the 'HIGH' region motif. A 'KMSKS' region motif is present at residues 619 to 623 (KMSKS). Lys-622 is an ATP binding site.

This sequence belongs to the class-I aminoacyl-tRNA synthetase family.

Its subcellular location is the cytoplasm. It catalyses the reaction tRNA(Leu) + L-leucine + ATP = L-leucyl-tRNA(Leu) + AMP + diphosphate. This is Leucine--tRNA ligase from Klebsiella pneumoniae subsp. pneumoniae (strain ATCC 700721 / MGH 78578).